Here is a 312-residue protein sequence, read N- to C-terminus: Lipoyl synthase (312 aa).

Residues Cys37, Cys42, Cys48, Cys67, Cys71, Cys74, and Ser281 each coordinate [4Fe-4S] cluster. Residues 52-270 (RDGPGTATFM…AVAEREFDFL (219 aa)) form the Radical SAM core domain.

This sequence belongs to the radical SAM superfamily. Lipoyl synthase family. [4Fe-4S] cluster is required as a cofactor.

Its subcellular location is the cytoplasm. The enzyme catalyses [[Fe-S] cluster scaffold protein carrying a second [4Fe-4S](2+) cluster] + N(6)-octanoyl-L-lysyl-[protein] + 2 oxidized [2Fe-2S]-[ferredoxin] + 2 S-adenosyl-L-methionine + 4 H(+) = [[Fe-S] cluster scaffold protein] + N(6)-[(R)-dihydrolipoyl]-L-lysyl-[protein] + 4 Fe(3+) + 2 hydrogen sulfide + 2 5'-deoxyadenosine + 2 L-methionine + 2 reduced [2Fe-2S]-[ferredoxin]. It functions in the pathway protein modification; protein lipoylation via endogenous pathway; protein N(6)-(lipoyl)lysine from octanoyl-[acyl-carrier-protein]: step 2/2. Catalyzes the radical-mediated insertion of two sulfur atoms into the C-6 and C-8 positions of the octanoyl moiety bound to the lipoyl domains of lipoate-dependent enzymes, thereby converting the octanoylated domains into lipoylated derivatives. The sequence is that of Lipoyl synthase from Halorubrum lacusprofundi (strain ATCC 49239 / DSM 5036 / JCM 8891 / ACAM 34).